We begin with the raw amino-acid sequence, 431 residues long: Probable pectate lyase 1 (431 aa).

The N-terminal stretch at 1–20 (MAVLPTWLLAMMCLLFFVGA) is a signal peptide. N23, N28, and N65 each carry an N-linked (GlcNAc...) asparagine glycan. 3 residues coordinate Ca(2+): D227, D251, and D255. R307 is a catalytic residue.

This sequence belongs to the polysaccharide lyase 1 family. It depends on Ca(2+) as a cofactor. Expressed in flowers, but not in leaves.

It carries out the reaction Eliminative cleavage of (1-&gt;4)-alpha-D-galacturonan to give oligosaccharides with 4-deoxy-alpha-D-galact-4-enuronosyl groups at their non-reducing ends.. Its pathway is glycan metabolism; pectin degradation; 2-dehydro-3-deoxy-D-gluconate from pectin: step 2/5. This Arabidopsis thaliana (Mouse-ear cress) protein is Probable pectate lyase 1.